A 276-amino-acid chain; its full sequence is Cerberus (276 aa).

An N-terminal signal peptide occupies residues methionine 1–glycine 20. 3 N-linked (GlcNAc...) asparagine glycosylation sites follow: asparagine 103, asparagine 118, and asparagine 160. Cystine bridges form between cysteine 175–cysteine 221, cysteine 189–cysteine 235, cysteine 199–cysteine 251, and cysteine 203–cysteine 253. The region spanning cysteine 175–asparagine 259 is the CTCK domain. N-linked (GlcNAc...) asparagine glycosylation occurs at asparagine 234.

Belongs to the DAN family. The long chain interacts with nodal/nr-1, bmp4 and wnt8, thereby inhibiting their function. The short chain interacts with nodal/nr-1 but not bmp4 or wnt8. In terms of tissue distribution, expressed in the anterior endomesoderm of the early gastrula with expression expanded laterally around the margin at the endoderm/mesoderm boundary.

The protein resides in the secreted. Functionally, inhibits wnt, nodal/nr-1 and bmp signaling in the embryo to promote head formation and anterior neural induction. Within the endoderm, acts as an essential mediator of nodal/nr-1-induced cardiogenesis in the overlying mesoderm. The protein is Cerberus of Xenopus tropicalis (Western clawed frog).